The chain runs to 338 residues: Heat-inducible transcription repressor HrcA (338 aa).

Belongs to the HrcA family.

In terms of biological role, negative regulator of class I heat shock genes (grpE-dnaK-dnaJ and groELS operons). Prevents heat-shock induction of these operons. The protein is Heat-inducible transcription repressor HrcA of Bacillus thuringiensis (strain Al Hakam).